The sequence spans 164 residues: FMN reductase (NADH) RutF (164 aa).

This sequence belongs to the non-flavoprotein flavin reductase family. RutF subfamily.

The enzyme catalyses FMNH2 + NAD(+) = FMN + NADH + 2 H(+). In terms of biological role, catalyzes the reduction of FMN to FMNH2 which is used to reduce pyrimidine by RutA via the Rut pathway. This is FMN reductase (NADH) RutF from Shigella flexneri serotype X (strain 2002017).